The primary structure comprises 289 residues: Diaminopimelate epimerase (289 aa).

The substrate site is built by Asn13, Gln47, and Asn67. The active-site Proton donor is the Cys76. Residues 77 to 78, Asn167, Asn200, and 218 to 219 contribute to the substrate site; these read GN and ER. Cys227 serves as the catalytic Proton acceptor. 228–229 lines the substrate pocket; it reads GT.

The protein belongs to the diaminopimelate epimerase family. In terms of assembly, homodimer.

The protein localises to the cytoplasm. The catalysed reaction is (2S,6S)-2,6-diaminopimelate = meso-2,6-diaminopimelate. Its pathway is amino-acid biosynthesis; L-lysine biosynthesis via DAP pathway; DL-2,6-diaminopimelate from LL-2,6-diaminopimelate: step 1/1. Catalyzes the stereoinversion of LL-2,6-diaminopimelate (L,L-DAP) to meso-diaminopimelate (meso-DAP), a precursor of L-lysine and an essential component of the bacterial peptidoglycan. The protein is Diaminopimelate epimerase of Burkholderia vietnamiensis (strain G4 / LMG 22486) (Burkholderia cepacia (strain R1808)).